Reading from the N-terminus, the 483-residue chain is Cyclic AMP-dependent transcription factor ATF-7 (483 aa).

The segment at 1 to 285 (MGDDRPFVCN…GMVVGSASTM (285 aa)) is transactivation domain. A C2H2-type zinc finger spans residues 7–31 (FVCNAPGCGQRFTNEDHLAVHKHKH). A Phosphothreonine; by MAPK11 modification is found at threonine 51. Phosphothreonine occurs at positions 53 and 101. Residue lysine 107 forms a Glycyl lysine isopeptide (Lys-Gly) (interchain with G-Cter in SUMO1) linkage. Disordered regions lie at residues 110 to 148 (EPVEVDSSPPDSPASSPCSPPLKEKEVTPKPVLISTPTP) and 299 to 345 (HPDA…NRAA). Composition is skewed to low complexity over residues 114-126 (VDSSPPDSPASSP) and 307-320 (QPQVSPAQPTPSTG). The segment covering 326–343 (TVDEDPDERRQRFLERNR) has biased composition (basic and acidic residues). The bZIP domain occupies 332-395 (DERRQRFLER…AQLKQLLLAH (64 aa)). The basic motif stretch occupies residues 334 to 354 (RRQRFLERNRAAASRCRQKRK). The segment at 360-388 (LEKKAEELTSQNIQLSNEVTLLRNEVAQL) is leucine-zipper. Disordered regions lie at residues 407–440 (TQGYLESPKESSEPTGSPAPVIQHSSATAPSNGL) and 464–483 (LSMPIQSHVIMTPQSQSAGR). 2 positions are modified to phosphoserine: serine 413 and serine 423. The span at 429 to 440 (QHSSATAPSNGL) shows a compositional bias: polar residues.

Belongs to the bZIP family. Homodimer; binds DNA as homodimer. Heterodimer; heterodimerizes with other members of ATF family and with JUN family members. Interacts with JNK2; the interaction does not phosphorylate ATF7 but acts as a docking site for other ATF-associated partners such as JUN family members. Interacts (via its transactivation domain) with TAF12 (isoforms TAFII15 and TAFII20); the interaction potentiates the transactivation activity (isoform TAFII20 only) and is inhibited by ATF7 sumoylation. Interacts with TAF4; the interaction inhibits the TAF12-dependent transactivation. Interacts with MAPK9; the interaction does not phosphorylate ATF7 but acts as a docking site for ATF7-associated partners such as JUN. Interacts with Ku complex components XRCC6 and XRCC7. Interacts with TERT. In terms of processing, on EGF stimulation, phosphorylated first on Thr-53 allowing subsequent phosphorylation on Thr-51. This latter phosphorylation prevents sumoylation, increases binding to TAF12 and enhances transcriptional activity. Social isolation stress as well as TNF-alpha also induce the phosphorylation of ATF7. Phosphorylated in proliferating colonic and small intestinal epithelial cells. Post-translationally, sumoylation delays nuclear localization and inhibits transactivation activity through preventing binding to TAF12. RANBP2 appears to be the specific E3 ligase.

Its subcellular location is the nucleus. It is found in the nucleoplasm. The protein resides in the chromosome. The protein localises to the telomere. Stress-responsive chromatin regulator that plays a role in various biological processes including innate immunological memory, adipocyte differentiation or telomerase regulation. In absence of stress, contributes to the formation of heterochromatin and heterochromatin-like structure by recruiting histone H3K9 tri- and di-methyltransferases thus silencing the transcription of target genes such as STAT1 in adipocytes, or genes involved in innate immunity in macrophages and adipocytes. Stress induces ATF7 phosphorylation that disrupts interactions with histone methyltransferase and enhances the association with coactivators containing histone acetyltransferase and/or histone demethylase, leading to disruption of the heterochromatin-like structure and subsequently transcriptional activation. In response to TNF-alpha, which is induced by various stresses, phosphorylated ATF7 and telomerase are released from telomeres leading to telomere shortening. Plays also a role in maintaining epithelial regenerative capacity and protecting against cell death during intestinal epithelial damage and repair. The sequence is that of Cyclic AMP-dependent transcription factor ATF-7 (ATF7) from Pongo abelii (Sumatran orangutan).